A 1114-amino-acid chain; its full sequence is Constitutive coactivator of PPAR-gamma-like protein 1 (1114 aa).

Residues 339 to 402 (PPHYLARPNP…YNLAEPALTL (64 aa)) form an interaction with YES1, SRC and FYN region. Disordered stretches follow at residues 372–396 (QAKP…YNLA) and 411–519 (EQNY…GNQI). A compositionally biased stretch (polar residues) spans 431–443 (SPINPAPSGSPNH). Over residues 477–498 (GWEKTGSHSEPQARGDPGDQTK) the composition is skewed to basic and acidic residues. Residues 499 to 510 (AEGSSTASSGSQ) show a composition bias toward polar residues. Thr-651 carries the post-translational modification Phosphothreonine. Residues 825–1114 (AEQAAKVEKM…LEAAVLKKEE (290 aa)) are RNA binding. Residues Arg-869, Arg-880, and Arg-882 each carry the omega-N-methylarginine modification. A disordered region spans residues 918 to 940 (FSGSDSSRTSKSQGGIQPIPSQG). N6-acetyllysine is present on Lys-928. Residues 929–940 (SQGGIQPIPSQG) show a composition bias toward low complexity. Ser-956 is modified (phosphoserine). 2 positions are modified to omega-N-methylarginine: Arg-978 and Arg-982. The interval 1009 to 1099 (AIQGKPPYAA…LNALSTDSGC (91 aa)) is disordered. Position 1019 is a phosphoserine (Ser-1019). The segment covering 1022-1033 (EVAKELKSRSGE) has biased composition (basic and acidic residues). The segment covering 1034 to 1043 (SKSSAMSSDG) has biased composition (polar residues). A phosphoserine mark is found at Ser-1040, Ser-1041, and Ser-1044. Polar residues predominate over residues 1060-1097 (MNGSAGDTRAPSHSESALNNDSKTCNTNPHLNALSTDS).

The protein belongs to the constitutive coactivator of PPAR-gamma family. In terms of assembly, interacts with PURA. Interacts with YES1, SRC, FYN. Upon tyrosine phosphorylation, interacts with PIK3R1. Arg-978 is dimethylated, probably to asymmetric dimethylarginine. Post-translationally, phosphorylated on tyrosine by src family kinases upon ultraviolet exposure.

It is found in the cytoplasm. Its subcellular location is the cell membrane. Component of the oxidative stress-induced survival signaling. May regulate the activation of SRC family protein kinases. May act as a scaffolding protein enabling SRC family protein kinases to phosphorylate and activate PI3-kinase. Binds IGF2 RNA and promotes the production of IGF2 protein. This chain is Constitutive coactivator of PPAR-gamma-like protein 1 (FAM120A), found in Bos taurus (Bovine).